We begin with the raw amino-acid sequence, 202 residues long: uncharacterized protein (202 aa).

The interval 1–20 is disordered; sequence MVGAVTQIADRPTDPSPWSP. Positions 19 to 79 constitute an HTH tetR-type domain; that stretch reads SPRETELLAV…AAFIEGIRQV (61 aa).

This is an uncharacterized protein from Mycobacterium bovis (strain ATCC BAA-935 / AF2122/97).